Consider the following 198-residue polypeptide: Shikimate kinase (198 aa).

26–31 (GSGKSQ) contacts ATP. S30 serves as a coordination point for Mg(2+). Substrate-binding residues include D48, R72, and G94. Residue R132 coordinates ATP. R151 contacts substrate. Residue Q167 coordinates ATP.

Belongs to the shikimate kinase family. Monomer. Mg(2+) serves as cofactor.

It localises to the cytoplasm. It carries out the reaction shikimate + ATP = 3-phosphoshikimate + ADP + H(+). Its pathway is metabolic intermediate biosynthesis; chorismate biosynthesis; chorismate from D-erythrose 4-phosphate and phosphoenolpyruvate: step 5/7. Functionally, catalyzes the specific phosphorylation of the 3-hydroxyl group of shikimic acid using ATP as a cosubstrate. The protein is Shikimate kinase of Prochlorococcus marinus (strain NATL2A).